A 213-amino-acid polypeptide reads, in one-letter code: MQPLSQIRREYSQGHLTEASLLADPYAQFDKWMADAVEAGLPDPTAMTVATVNSQGQPSQRIVLLKDVMDGCFVFYTNLGSRKAQDLLTNSKISLHFPWHILERQVLVRGSASLLPRQDVQHYFSSRPLSSQLAAWTSKQSQPIESRDALLSRFEDTKIKFSDKDIPAPEFWGGFKIIPQEIEFWQGGEHRLHDRFLFSRENSSNWSIQRLMP.

Substrate is bound by residues arginine 8–tyrosine 11 and lysine 66. FMN is bound by residues arginine 61–lysine 66, tyrosine 76–threonine 77, arginine 82, lysine 83, and glutamine 105. Residues tyrosine 123, arginine 127, and serine 131 each coordinate substrate. Residues glutamine 140–serine 141 and tryptophan 185 contribute to the FMN site. Arginine 191 to histidine 193 contacts substrate. An FMN-binding site is contributed by arginine 195.

Belongs to the pyridoxamine 5'-phosphate oxidase family. In terms of assembly, homodimer. It depends on FMN as a cofactor.

It catalyses the reaction pyridoxamine 5'-phosphate + O2 + H2O = pyridoxal 5'-phosphate + H2O2 + NH4(+). The enzyme catalyses pyridoxine 5'-phosphate + O2 = pyridoxal 5'-phosphate + H2O2. It participates in cofactor metabolism; pyridoxal 5'-phosphate salvage; pyridoxal 5'-phosphate from pyridoxamine 5'-phosphate: step 1/1. Its pathway is cofactor metabolism; pyridoxal 5'-phosphate salvage; pyridoxal 5'-phosphate from pyridoxine 5'-phosphate: step 1/1. In terms of biological role, catalyzes the oxidation of either pyridoxine 5'-phosphate (PNP) or pyridoxamine 5'-phosphate (PMP) into pyridoxal 5'-phosphate (PLP). The protein is Pyridoxine/pyridoxamine 5'-phosphate oxidase of Pseudoalteromonas atlantica (strain T6c / ATCC BAA-1087).